The chain runs to 1487 residues: Collagen alpha-1(II) chain (1487 aa).

The first 25 residues, 1-25 (MIRLGAPQTLVLLTLLVAAVLRCHG), serve as a signal peptide directing secretion. Residues 26 to 181 (QDVQKAGSCV…PPGLGGNFAA (156 aa)) constitute a propeptide, N-terminal propeptide. Residues 32–90 (GSCVQDGQRYNDKDVWKPEPCRICVCDTGTVLCDDIICEDMKDCLSPETPFGECCPICS) form the VWFC domain. Residues 96-1234 (ASGQPGPKGQ…GLGQREKGPD (1139 aa)) are disordered. 2 stretches are compositionally biased toward basic and acidic residues: residues 105–116 (QKGEPGDIKDIV) and 133–154 (PRGD…RDGE). Residues 158-173 (PGNPGPPGPPGPPGPP) are compositionally biased toward pro residues. Lysine 190 is subject to 5-hydroxylysine. The O-linked (Gal...) hydroxylysine glycan is linked to lysine 190. Low complexity predominate over residues 192–203 (GGAQMGVMQGPM). The triple-helical region stretch occupies residues 201 to 1214 (GPMGPMGPRG…PGPPGPPGPP (1014 aa)). Residues 208 to 217 (PRGPPGPAGA) are compositionally biased toward pro residues. Hydroxyproline occurs at positions 212, 218, 230, 233, 245, 248, 251, 260, 269, 278, 281, and 284. Positions 218-239 (PGPQGFQGNPGEPGEPGVSGPM) are enriched in low complexity. Pro residues predominate over residues 241–250 (PRGPPGPPGK). Positions 251-265 (PGDDGEAGKPGKSGE) are enriched in basic and acidic residues. Lysine 287 bears the 5-hydroxylysine mark. Lysine 287 carries an O-linked (Gal...) hydroxylysine glycan. Hydroxyproline is present on proline 293. The residue at position 299 (lysine 299) is a 5-hydroxylysine. Residue lysine 299 is glycosylated (O-linked (Gal...) hydroxylysine). Residue proline 305 is modified to Hydroxyproline. Residue lysine 308 is modified to 5-hydroxylysine. O-linked (Gal...) hydroxylysine glycosylation occurs at lysine 308. The segment covering 310–320 (ESGSPGENGSP) has biased composition (low complexity). A hydroxyproline mark is found at proline 314, proline 320, proline 329, proline 350, proline 356, proline 365, proline 368, and proline 371. Positions 335–350 (TGPAGAAGARGNDGQP) are enriched in low complexity. A compositionally biased stretch (gly residues) spans 360-369 (GPAGGPGFPG). Composition is skewed to low complexity over residues 370 to 382 (APGA…PTGA) and 391 to 431 (PRGE…AGAP). Lysine 374 carries the post-translational modification 5-hydroxylysine. O-linked (Gal...) hydroxylysine glycosylation occurs at lysine 374. Hydroxyproline is present on residues proline 395, proline 398, proline 401, proline 410, and proline 416. 5-hydroxylysine is present on lysine 419. 4 positions are modified to hydroxyproline: proline 425, proline 431, proline 434, and proline 440. Positions 433 to 442 (FPGPRGPPGP) are enriched in pro residues. Position 452 is a 5-hydroxylysine (lysine 452). A Hydroxyproline modification is found at proline 458. Lysine 464 and lysine 470 each carry 5-hydroxylysine. Hydroxyproline is present on residues proline 473, proline 482, proline 497, proline 506, proline 512, and proline 518. The residue at position 527 (lysine 527) is a 5-hydroxylysine. Proline 530 carries the hydroxyproline modification. Lysine 542 carries the post-translational modification 5-hydroxylysine. 8 positions are modified to hydroxyproline: proline 551, proline 557, proline 566, proline 581, proline 587, proline 590, proline 599, and proline 605. 5-hydroxylysine is present on lysine 608. Lysine 608 is a glycosylation site (O-linked (Gal...) hydroxylysine). Proline 614 is modified (hydroxyproline). At lysine 620 the chain carries 5-hydroxylysine. Lysine 620 carries an O-linked (Gal...) hydroxylysine glycan. A compositionally biased stretch (low complexity) spans 622–631 (LPGAPGLRGL). Hydroxyproline occurs at positions 623, 626, 632, 644, 659, and 668. Low complexity predominate over residues 656–667 (QGAPGPSGFQGL). A 3-hydroxyproline modification is found at proline 670. A hydroxyproline mark is found at proline 671 and proline 674. A compositionally biased stretch (low complexity) spans 721 to 736 (LPGTPGTDGPKGAAGP). The segment covering 764–775 (KGDRGDVGEKGP) has biased composition (basic and acidic residues). Low complexity-rich tracts occupy residues 833 to 848 (AGFA…PGAK) and 877 to 913 (PTGV…SNGN). 3-hydroxyproline is present on proline 907. 3 positions are modified to 4-hydroxyproline: proline 908, proline 914, and proline 920. A compositionally biased stretch (pro residues) spans 1069-1079 (APGPPGSPGPA). A compositionally biased stretch (low complexity) spans 1091–1109 (AGAQGPMGPAGPAGARGMP). Residues 1115–1129 (RGDKGETGEAGERGL) show a composition bias toward basic and acidic residues. Lysine 1130 bears the 5-hydroxylysine mark. Lysine 1130 is a glycosylation site (O-linked (Gal...) hydroxylysine). A 3-hydroxyproline modification is found at proline 1144. Residues 1148-1157 (SGDQGASGPA) are compositionally biased toward low complexity. Proline 1181 is modified (4-hydroxyproline). Proline 1186 carries the post-translational modification 3-hydroxyproline. Proline 1187 carries the post-translational modification 4-hydroxyproline. The span at 1199–1216 (AGPPGNPGPPGPPGPPGP) shows a compositional bias: pro residues. Proline 1201 carries the 3-hydroxyproline modification. 4-hydroxyproline is present on residues proline 1202 and proline 1205. Proline 1207 is modified (3-hydroxyproline). 4-hydroxyproline occurs at positions 1208 and 1211. Proline 1213 is subject to 3-hydroxyproline. Proline 1214 is modified (4-hydroxyproline). Residues 1215–1241 (GPGIDMSAFAGLGQREKGPDPLQYMRA) form a nonhelical region (C-terminal) region. The Fibrillar collagen NC1 domain maps to 1253 to 1487 (AEVDATLKSL…GVDIGPVCFL (235 aa)). 3 cysteine pairs are disulfide-bonded: cysteine 1283/cysteine 1315, cysteine 1323/cysteine 1485, and cysteine 1393/cysteine 1438. Ca(2+) contacts are provided by aspartate 1301, asparagine 1303, glutamine 1304, cysteine 1306, and aspartate 1309. Asparagine 1388 carries N-linked (GlcNAc...) asparagine glycosylation.

Belongs to the fibrillar collagen family. In terms of assembly, homotrimers of alpha 1(II) chains. Post-translationally, probably 3-hydroxylated on prolines by LEPREL1. Proline residues at the third position of the tripeptide repeating unit (G-X-P) are hydroxylated in some or all of the chains. Proline residues at the second position of the tripeptide repeating unit (G-P-X) are hydroxylated in some of the chains. O-linked glycans consist of Glc-Gal disaccharides bound to the oxygen atom of post-translationally added hydroxyl groups. In terms of processing, contains mostly 4-hydroxyproline. Prolines at the third position of the tripeptide repeating unit (G-X-P) are 4-hydroxylated in some or all of the chains. Post-translationally, contains 3-hydroxyproline at a few sites. This modification occurs on the first proline residue in the sequence motif Gly-Pro-Hyp, where Hyp is 4-hydroxyproline. Lysine residues at the third position of the tripeptide repeating unit (G-X-Y) are 5-hydroxylated in some or all of the chains. In terms of processing, O-glycosylated on hydroxylated lysine residues. The O-linked glycan consists of a Glc-Gal disaccharide.

The protein localises to the secreted. Its subcellular location is the extracellular space. The protein resides in the extracellular matrix. Type II collagen is specific for cartilaginous tissues. It is essential for the normal embryonic development of the skeleton, for linear growth and for the ability of cartilage to resist compressive forces. This is Collagen alpha-1(II) chain from Bos taurus (Bovine).